The following is a 446-amino-acid chain: Ribosome biogenesis protein WDR12 homolog (446 aa).

Positions 21–105 are ubiquitin-like (UBL) domain; that stretch reads VQITFFSKDK…ETILKIECII (85 aa). 2 WD repeats span residues 171–211 and 216–255; these read KCSG…LVEK and GHER…EATI. The tract at residues 256 to 275 is disordered; that stretch reads YEKEEEESSAKKKRKKDTRT. WD repeat units lie at residues 284-324, 326-365, 371-412, and 416-446; these read GHRD…EVSR, KGPK…GAMV, GHQN…SSLF, and GHED…FETS.

It belongs to the WD repeat WDR12/YTM1 family.

Its subcellular location is the nucleus. It is found in the nucleolus. It localises to the nucleoplasm. Required for maturation of ribosomal RNAs and formation of the large ribosomal subunit. The chain is Ribosome biogenesis protein WDR12 homolog from Caenorhabditis briggsae.